A 572-amino-acid polypeptide reads, in one-letter code: Phosphoenolpyruvate-protein phosphotransferase (572 aa).

Residue H190 is the Tele-phosphohistidine intermediate of the active site. Phosphoenolpyruvate-binding residues include R297 and R333. Positions 427 and 451 each coordinate Mg(2+). Phosphoenolpyruvate is bound by residues 450–451 and R461; that span reads ND. The Proton donor role is filled by C498.

The protein belongs to the PEP-utilizing enzyme family. In terms of assembly, homodimer. Mg(2+) is required as a cofactor.

Its subcellular location is the cytoplasm. The enzyme catalyses L-histidyl-[protein] + phosphoenolpyruvate = N(pros)-phospho-L-histidyl-[protein] + pyruvate. Its function is as follows. General (non sugar-specific) component of the phosphoenolpyruvate-dependent sugar phosphotransferase system (sugar PTS). This major carbohydrate active-transport system catalyzes the phosphorylation of incoming sugar substrates concomitantly with their translocation across the cell membrane. Enzyme I transfers the phosphoryl group from phosphoenolpyruvate (PEP) to the phosphoryl carrier protein (HPr). The chain is Phosphoenolpyruvate-protein phosphotransferase (ptsI) from Mycoplasma pneumoniae (strain ATCC 29342 / M129 / Subtype 1) (Mycoplasmoides pneumoniae).